The sequence spans 86 residues: Small ribosomal subunit protein bS20 (86 aa).

Residues 1 to 21 (MANTKSAIKAARKSLRLHDRN) form a disordered region.

This sequence belongs to the bacterial ribosomal protein bS20 family.

Its function is as follows. Binds directly to 16S ribosomal RNA. The polypeptide is Small ribosomal subunit protein bS20 (Opitutus terrae (strain DSM 11246 / JCM 15787 / PB90-1)).